The chain runs to 637 residues: Threonine--tRNA ligase (637 aa).

A TGS domain is found at Met-1 to Thr-61. The catalytic stretch occupies residues Asp-242 to Pro-532. Positions 333, 384, and 509 each coordinate Zn(2+).

It belongs to the class-II aminoacyl-tRNA synthetase family. In terms of assembly, homodimer. Requires Zn(2+) as cofactor.

The protein localises to the cytoplasm. It catalyses the reaction tRNA(Thr) + L-threonine + ATP = L-threonyl-tRNA(Thr) + AMP + diphosphate + H(+). Catalyzes the attachment of threonine to tRNA(Thr) in a two-step reaction: L-threonine is first activated by ATP to form Thr-AMP and then transferred to the acceptor end of tRNA(Thr). Also edits incorrectly charged L-seryl-tRNA(Thr). In Clostridium acetobutylicum (strain ATCC 824 / DSM 792 / JCM 1419 / IAM 19013 / LMG 5710 / NBRC 13948 / NRRL B-527 / VKM B-1787 / 2291 / W), this protein is Threonine--tRNA ligase.